The primary structure comprises 174 residues: Cytochrome c oxidase subunit 5A, mitochondrial (174 aa).

A mitochondrion-targeting transit peptide spans 1–29 (MASLTRAVTRLAIAGRQAVRTIATTTPVS).

The protein belongs to the cytochrome c oxidase subunit 5A family. As to quaternary structure, component of the cytochrome c oxidase (complex IV, CIV), a multisubunit enzyme composed of a catalytic core of 3 subunits and several supernumerary subunits. The complex exists as a monomer or a dimer and forms supercomplexes (SCs) in the inner mitochondrial membrane with ubiquinol-cytochrome c oxidoreductase (cytochrome b-c1 complex, complex III, CIII).

Its subcellular location is the mitochondrion inner membrane. It participates in energy metabolism; oxidative phosphorylation. Functionally, component of the cytochrome c oxidase, the last enzyme in the mitochondrial electron transport chain which drives oxidative phosphorylation. The respiratory chain contains 3 multisubunit complexes succinate dehydrogenase (complex II, CII), ubiquinol-cytochrome c oxidoreductase (cytochrome b-c1 complex, complex III, CIII) and cytochrome c oxidase (complex IV, CIV), that cooperate to transfer electrons derived from NADH and succinate to molecular oxygen, creating an electrochemical gradient over the inner membrane that drives transmembrane transport and the ATP synthase. Cytochrome c oxidase is the component of the respiratory chain that catalyzes the reduction of oxygen to water. Electrons originating from reduced cytochrome c in the intermembrane space (IMS) are transferred via the dinuclear copper A center (CU(A)) of subunit 2 and heme A of subunit 1 to the active site in subunit 1, a binuclear center (BNC) formed by heme A3 and copper B (CU(B)). The BNC reduces molecular oxygen to 2 water molecules using 4 electrons from cytochrome c in the IMS and 4 protons from the mitochondrial matrix. This chain is Cytochrome c oxidase subunit 5A, mitochondrial, found in Caenorhabditis elegans.